The following is a 314-amino-acid chain: Nodulation protein D 1 (314 aa).

The 58-residue stretch at 6 to 63 (LDLNLLVALDALMTERNLTAAARKIHLSQPAMSAAVARLRTYFGDELFTMRGRELVPT) folds into the HTH lysR-type domain. The H-T-H motif DNA-binding region spans 23-42 (LTAAARKIHLSQPAMSAAVA).

This sequence belongs to the LysR transcriptional regulatory family.

Its function is as follows. NodD regulates the expression of the nodABCFE genes which encode other nodulation proteins. NodD is also a negative regulator of its own expression. Binds flavonoids as inducers. The polypeptide is Nodulation protein D 1 (nodD1) (Bradyrhizobium sp. (strain NC92)).